Consider the following 141-residue polypeptide: ATP synthase epsilon chain (141 aa).

Belongs to the ATPase epsilon chain family. In terms of assembly, F-type ATPases have 2 components, CF(1) - the catalytic core - and CF(0) - the membrane proton channel. CF(1) has five subunits: alpha(3), beta(3), gamma(1), delta(1), epsilon(1). CF(0) has three main subunits: a, b and c.

It is found in the cell membrane. Functionally, produces ATP from ADP in the presence of a proton gradient across the membrane. The chain is ATP synthase epsilon chain (atpC) from Mycoplasmopsis pulmonis (strain UAB CTIP) (Mycoplasma pulmonis).